The following is a 545-amino-acid chain: CTP synthase (545 aa).

The interval 1 to 265 is amidoligase domain; the sequence is MSKYIFVTGG…LVPIAKQLDL (265 aa). Serine 13 serves as a coordination point for CTP. Serine 13 contributes to the UTP binding site. Residues 14–19 and aspartate 71 each bind ATP; that span reads SLGKGI. 2 residues coordinate Mg(2+): aspartate 71 and glutamate 139. CTP-binding positions include 146 to 148, 186 to 191, and lysine 222; these read DIE and KTKPTQ. UTP contacts are provided by residues 186–191 and lysine 222; that span reads KTKPTQ. A Glutamine amidotransferase type-1 domain is found at 290-544; sequence KIAFVGKYLQ…VENAYKCQRS (255 aa). Glycine 355 serves as a coordination point for L-glutamine. Cysteine 382 serves as the catalytic Nucleophile; for glutamine hydrolysis. L-glutamine-binding positions include 383–386, glutamate 406, and arginine 473; that span reads LGMQ. Active-site residues include histidine 517 and glutamate 519.

The protein belongs to the CTP synthase family. As to quaternary structure, homotetramer.

The enzyme catalyses UTP + L-glutamine + ATP + H2O = CTP + L-glutamate + ADP + phosphate + 2 H(+). It catalyses the reaction L-glutamine + H2O = L-glutamate + NH4(+). The catalysed reaction is UTP + NH4(+) + ATP = CTP + ADP + phosphate + 2 H(+). It functions in the pathway pyrimidine metabolism; CTP biosynthesis via de novo pathway; CTP from UDP: step 2/2. With respect to regulation, allosterically activated by GTP, when glutamine is the substrate; GTP has no effect on the reaction when ammonia is the substrate. The allosteric effector GTP functions by stabilizing the protein conformation that binds the tetrahedral intermediate(s) formed during glutamine hydrolysis. Inhibited by the product CTP, via allosteric rather than competitive inhibition. Functionally, catalyzes the ATP-dependent amination of UTP to CTP with either L-glutamine or ammonia as the source of nitrogen. Regulates intracellular CTP levels through interactions with the four ribonucleotide triphosphates. The chain is CTP synthase from Nautilia profundicola (strain ATCC BAA-1463 / DSM 18972 / AmH).